Consider the following 115-residue polypeptide: Ribonuclease P protein component (115 aa).

The protein belongs to the RnpA family. As to quaternary structure, consists of a catalytic RNA component (M1 or rnpB) and a protein subunit.

The enzyme catalyses Endonucleolytic cleavage of RNA, removing 5'-extranucleotides from tRNA precursor.. Its function is as follows. RNaseP catalyzes the removal of the 5'-leader sequence from pre-tRNA to produce the mature 5'-terminus. It can also cleave other RNA substrates such as 4.5S RNA. The protein component plays an auxiliary but essential role in vivo by binding to the 5'-leader sequence and broadening the substrate specificity of the ribozyme. The polypeptide is Ribonuclease P protein component (Symbiobacterium thermophilum (strain DSM 24528 / JCM 14929 / IAM 14863 / T)).